The primary structure comprises 396 residues: S-adenosylmethionine synthase (396 aa).

Histidine 15 is a binding site for ATP. Aspartate 17 is a binding site for Mg(2+). Glutamate 43 contributes to the K(+) binding site. Positions 56 and 99 each coordinate L-methionine. The tract at residues 99–109 (QSPDIALGVNR) is flexible loop. Residues 175–177 (DGK), 241–242 (RF), aspartate 250, 256–257 (RK), alanine 273, and lysine 277 contribute to the ATP site. Aspartate 250 serves as a coordination point for L-methionine. An L-methionine-binding site is contributed by lysine 281.

The protein belongs to the AdoMet synthase family. As to quaternary structure, homotetramer; dimer of dimers. Mg(2+) is required as a cofactor. It depends on K(+) as a cofactor.

It localises to the cytoplasm. The catalysed reaction is L-methionine + ATP + H2O = S-adenosyl-L-methionine + phosphate + diphosphate. It participates in amino-acid biosynthesis; S-adenosyl-L-methionine biosynthesis; S-adenosyl-L-methionine from L-methionine: step 1/1. In terms of biological role, catalyzes the formation of S-adenosylmethionine (AdoMet) from methionine and ATP. The overall synthetic reaction is composed of two sequential steps, AdoMet formation and the subsequent tripolyphosphate hydrolysis which occurs prior to release of AdoMet from the enzyme. The chain is S-adenosylmethionine synthase from Carboxydothermus hydrogenoformans (strain ATCC BAA-161 / DSM 6008 / Z-2901).